We begin with the raw amino-acid sequence, 245 residues long: Complement C1q subcomponent subunit A (245 aa).

The N-terminal stretch at 1–22 (METSQGWLVACVLTMTLVWTVA) is a signal peptide. The segment at 28–114 (APNGKDGAPG…NPGNIRDQPR (87 aa)) is disordered. The region spanning 31 to 109 (GKDGAPGNPG…KGVKGNPGNI (79 aa)) is the Collagen-like domain. Residues Pro39 and Pro45 each carry the 4-hydroxyproline modification. The residue at position 48 (Lys48) is a 5-hydroxylysine. O-linked (Gal...) hydroxylysine; alternate glycosylation is present at Lys48. Pro54 carries the post-translational modification 4-hydroxyproline. Lys67 carries the 5-hydroxylysine modification. O-linked (Gal...) hydroxylysine; alternate glycosylation occurs at Lys67. 4-hydroxyproline occurs at positions 79 and 85. Residues 79-99 (PGNVGLPGPSGPLGDSGPQGL) are compositionally biased toward low complexity. Residue Lys100 is modified to 5-hydroxylysine. An O-linked (Gal...) hydroxylysine; alternate glycan is attached at Lys100. Residues 110 to 245 (RDQPRPAFSA…FSGFLIFPSA (136 aa)) enclose the C1q domain. N-linked (GlcNAc...) asparagine glycosylation is present at Asn146. Gln199 is a binding site for Ca(2+).

Core component of the complement C1 complex, a calcium-dependent complex composed of 1 molecule of the C1Q subcomplex, 2 molecules of C1R and 2 molecules of C1S. The C1Q subcomplex is composed 18 subunits: 3 chains of C1QA, C1QB, and C1QC trimerize to form 6 collagen-like triple helices connected to six globular ligand-recognition modules (C1q domain). Interacts with CR1 (via Sushi 24 and Sushi 25 domains). Interacts (via C-terminus) with CD33; this interaction activates CD33 inhibitory motifs. In terms of processing, O-linked glycans are assumed to be the Glc-Gal disaccharides typically found as secondary modifications of hydroxylated lysines in collagen-like domains.

Its subcellular location is the secreted. It is found in the cell surface. With respect to regulation, the C1Q subcomplex is inhibited by sulfated molecules, such as triterpenoid sulfates, heparan sulfate, or chondroitin sulfates. In terms of biological role, core component of the complement C1 complex, a multiprotein complex that initiates the classical pathway of the complement system, a cascade of proteins that leads to phagocytosis and breakdown of pathogens and signaling that strengthens the adaptive immune system. The classical complement pathway is initiated by the C1Q subcomplex of the C1 complex, which specifically binds IgG or IgM immunoglobulins complexed with antigens, forming antigen-antibody complexes on the surface of pathogens: C1QA, together with C1QB and C1QC, specifically recognizes and binds the Fc regions of IgG or IgM via its C1q domain. Immunoglobulin-binding activates the proenzyme C1R, which cleaves C1S, initiating the proteolytic cascade of the complement system. The C1Q subcomplex is activated by a hexamer of IgG complexed with antigens, while it is activated by a pentameric IgM. The C1Q subcomplex also recognizes and binds phosphatidylserine exposed on the surface of cells undergoing programmed cell death, possibly promoting activation of the complement system. This Mus musculus (Mouse) protein is Complement C1q subcomponent subunit A.